We begin with the raw amino-acid sequence, 255 residues long: MLQIGPYTFQSRLLLGTGKYPNIDIQKEAVEASGAEILTFAVRRMNIFAPDQPNFLEKIDVTKYKLLPNTAGAKTAEEAVRIARLAKASGLCDMVKVEVIGCDQTLLPDPVETLKATEMLLEEGFIVLPYTSDDVVLAKRLQQLGCHAIMPGASPIGSGQGIINPLNIQFIIEQATVPVIIDAGIGGPADAALAMELGADGVLLNTAVASAKDPVKMAKAMKLAIEAGRLGYEAGRIPKKKYATASSPSEGMSIV.

Lysine 96 serves as the catalytic Schiff-base intermediate with DXP. Residues glycine 157, 183–184 (AG), and 205–206 (NT) each bind 1-deoxy-D-xylulose 5-phosphate.

The protein belongs to the ThiG family. In terms of assembly, homotetramer. Forms heterodimers with either ThiH or ThiS.

It is found in the cytoplasm. It carries out the reaction [ThiS sulfur-carrier protein]-C-terminal-Gly-aminoethanethioate + 2-iminoacetate + 1-deoxy-D-xylulose 5-phosphate = [ThiS sulfur-carrier protein]-C-terminal Gly-Gly + 2-[(2R,5Z)-2-carboxy-4-methylthiazol-5(2H)-ylidene]ethyl phosphate + 2 H2O + H(+). Its pathway is cofactor biosynthesis; thiamine diphosphate biosynthesis. Functionally, catalyzes the rearrangement of 1-deoxy-D-xylulose 5-phosphate (DXP) to produce the thiazole phosphate moiety of thiamine. Sulfur is provided by the thiocarboxylate moiety of the carrier protein ThiS. In vitro, sulfur can be provided by H(2)S. The sequence is that of Thiazole synthase from Anoxybacillus flavithermus (strain DSM 21510 / WK1).